An 852-amino-acid chain; its full sequence is Cell surface glycoprotein (852 aa).

Residues 1–34 (MTDTTGKLRAVLLTALMVGSVIGAGVAFTGGAAA) form the signal peptide. An N-linked (GalNAc...) (glycosaminoglycan) asparagine glycan is attached at Asn-36. Residues 84 to 131 (KLDNEKEVSPATLSRTGGSDEGVPLQMPIPEDQSTGSYDSNGPDNDEA) form a disordered region. Residues 115–126 (DQSTGSYDSNGP) show a composition bias toward polar residues. Asn-339, Asn-398, Asn-438, Asn-513, Asn-643, Asn-727, Asn-751, and Asn-787 each carry an N-linked (Glc...) asparagine glycan. The interval 772–828 (ELEEPDQTTVDQPENNQTMTTTMTETTTETTTEMTTTQENTTENGSEGTSDGESGGS) is disordered. The span at 785 to 823 (ENNQTMTTTMTETTTETTTEMTTTQENTTENGSEGTSDG) shows a compositional bias: low complexity. Thr-789, Thr-791, Thr-792, Thr-793, Thr-795, Thr-797, Thr-798, Thr-799, Thr-801, Thr-802, Thr-803, Thr-806, Thr-807, and Thr-808 each carry an O-linked (Gal...) threonine glycan. Asn-811 carries N-linked (Glc...) asparagine glycosylation. O-linked (Gal...) threonine glycans are attached at residues Thr-812 and Thr-813. The N-linked (Glc...) asparagine glycan is linked to Asn-815. The helical transmembrane segment at 829-849 (IPGFGVGVALVAVLGAALLAL) threads the bilayer. Positions 830-832 (PGF) match the PGF sorting signal motif.

This sequence belongs to the halobacterial S-layer protein family. N-linked glycan at Asn-36 consists of a glycosaminoglycan chain, constructed by a repeating sulfated pentasaccharide block composed of GlcNAc, GalNAc, Gal, GalA, 3-O-methyl-GalA, and sulfate in the molar ratio of 1:1:1:1:1:2; the other N-linked glycans contain Glc, GlcA and IdoA. Post-translationally, O-linked glycans consist of Glc-Gal disaccharides. In terms of processing, the C-terminus (residues 770-778) is lipidated with diphytanylglyceryl phosphate. Cleaved by the archaeosortase ArtA at the C-terminus, with removal of a short hydrophobic segment.

It localises to the secreted. Its subcellular location is the cell wall. It is found in the S-layer. The protein localises to the cell membrane. S-layer protein. The S-layer is a paracrystalline mono-layered assembly of proteins which coat the surface of the cell. The polypeptide is Cell surface glycoprotein (csg) (Halobacterium salinarum (strain ATCC 29341 / DSM 671 / R1)).